The sequence spans 617 residues: Translation initiation factor IF-2 (617 aa).

Positions 1–11 (MSKHKPRHFQK) are enriched in basic residues. Residues 1-25 (MSKHKPRHFQKNKFDNRAKTSAKQQ) form a disordered region. One can recognise a tr-type G domain in the interval 119 to 288 (PRPPIVTIMG…ILLVAEVEDY (170 aa)). Residues 128 to 135 (GHVDHGKT) form a G1 region. 128–135 (GHVDHGKT) provides a ligand contact to GTP. The segment at 153 to 157 (GITQK) is G2. A G3 region spans residues 175 to 178 (DTPG). GTP is bound by residues 175–179 (DTPGH) and 229–232 (NKMD). Residues 229-232 (NKMD) form a G4 region. The tract at residues 265–267 (SAL) is G5.

Belongs to the TRAFAC class translation factor GTPase superfamily. Classic translation factor GTPase family. IF-2 subfamily.

The protein localises to the cytoplasm. Functionally, one of the essential components for the initiation of protein synthesis. Protects formylmethionyl-tRNA from spontaneous hydrolysis and promotes its binding to the 30S ribosomal subunits. Also involved in the hydrolysis of GTP during the formation of the 70S ribosomal complex. This is Translation initiation factor IF-2 (infB) from Mycoplasma pneumoniae (strain ATCC 29342 / M129 / Subtype 1) (Mycoplasmoides pneumoniae).